Reading from the N-terminus, the 496-residue chain is UDP-glycosyltransferase 73C4 (496 aa).

UDP-alpha-D-glucose is bound by residues Ser-297, 357–359, 374–382, and 396–399; these read SPQ, HCGWNSTLE, and FGDQ. The tract at residues 450–475 is disordered; it reads SDDAKERRRRVKELGESAHKAVEEGG. A compositionally biased stretch (basic and acidic residues) spans 451–472; that stretch reads DDAKERRRRVKELGESAHKAVE.

Belongs to the UDP-glycosyltransferase family.

This Arabidopsis thaliana (Mouse-ear cress) protein is UDP-glycosyltransferase 73C4 (UGT73C4).